Here is a 255-residue protein sequence, read N- to C-terminus: Anamorsin homolog (255 aa).

Residues 1-163 form an N-terminal SAM-like domain region; sequence MPKETLVVSK…VRPNWKSKTD (163 aa). A linker region spans residues 164-185; that stretch reads KKSPSMIDAAPIDGYISKAPDY. Positions 188, 195, 198, and 200 each coordinate [2Fe-2S] cluster. The fe-S binding site A stretch occupies residues 188–200; it reads CSTKPRACANCTC. Residues Cys224, Cys227, Cys235, and Cys238 each coordinate [4Fe-4S] cluster. Short sequence motifs (cx2C motif) lie at residues 224 to 227 and 235 to 238; these read CGNC and CESC. The segment at 224–238 is fe-S binding site B; it reads CGNCYLGDAFRCESC.

Belongs to the anamorsin family. In terms of assembly, monomer. [2Fe-2S] cluster is required as a cofactor. [4Fe-4S] cluster serves as cofactor.

The protein localises to the cytoplasm. The protein resides in the mitochondrion intermembrane space. Functionally, component of the cytosolic iron-sulfur (Fe-S) protein assembly (CIA) machinery. Required for the maturation of extramitochondrial Fe-S proteins. Part of an electron transfer chain functioning in an early step of cytosolic Fe-S biogenesis, facilitating the de novo assembly of a [4Fe-4S] cluster on the cytosolic Fe-S scaffold complex. Electrons are transferred from NADPH via a FAD- and FMN-containing diflavin oxidoreductase. Together with the diflavin oxidoreductase, also required for the assembly of the diferric tyrosyl radical cofactor of ribonucleotide reductase (RNR), probably by providing electrons for reduction during radical cofactor maturation in the catalytic small subunit. This is Anamorsin homolog from Theileria annulata.